A 68-amino-acid chain; its full sequence is ATP synthase F(0) complex subunit 8 (68 aa).

The helical transmembrane segment at threonine 8–phenylalanine 24 threads the bilayer. The residue at position 54 (lysine 54) is an N6-acetyllysine; alternate. The residue at position 54 (lysine 54) is an N6-succinyllysine; alternate. An N6-acetyllysine modification is found at lysine 57.

This sequence belongs to the ATPase protein 8 family. As to quaternary structure, component of the ATP synthase complex composed at least of ATP5F1A/subunit alpha, ATP5F1B/subunit beta, ATP5MC1/subunit c (homooctomer), MT-ATP6/subunit a, MT-ATP8/subunit 8, ATP5ME/subunit e, ATP5MF/subunit f, ATP5MG/subunit g, ATP5MK/subunit k, ATP5MJ/subunit j, ATP5F1C/subunit gamma, ATP5F1D/subunit delta, ATP5F1E/subunit epsilon, ATP5PF/subunit F6, ATP5PB/subunit b, ATP5PD/subunit d, ATP5PO/subunit OSCP. ATP synthase complex consists of a soluble F(1) head domain (subunits alpha(3) and beta(3)) - the catalytic core - and a membrane F(0) domain - the membrane proton channel (subunits c, a, 8, e, f, g, k and j). These two domains are linked by a central stalk (subunits gamma, delta, and epsilon) rotating inside the F1 region and a stationary peripheral stalk (subunits F6, b, d, and OSCP). Interacts with PRICKLE3.

It is found in the mitochondrion membrane. In terms of biological role, subunit 8, of the mitochondrial membrane ATP synthase complex (F(1)F(0) ATP synthase or Complex V) that produces ATP from ADP in the presence of a proton gradient across the membrane which is generated by electron transport complexes of the respiratory chain. ATP synthase complex consist of a soluble F(1) head domain - the catalytic core - and a membrane F(1) domain - the membrane proton channel. These two domains are linked by a central stalk rotating inside the F(1) region and a stationary peripheral stalk. During catalysis, ATP synthesis in the catalytic domain of F(1) is coupled via a rotary mechanism of the central stalk subunits to proton translocation. In vivo, can only synthesize ATP although its ATP hydrolase activity can be activated artificially in vitro. Part of the complex F(0) domain. This is ATP synthase F(0) complex subunit 8 from Hippopotamus amphibius (Hippopotamus).